A 793-amino-acid chain; its full sequence is Protein smoothened (793 aa).

An N-terminal signal peptide occupies residues 1–32 (MAAGRPVRGPELAPRRLLQLLLLVLLGGPGRG). Residues 33 to 237 (AALSGNVTGP…EAEHQDMHSY (205 aa)) lie on the Extracellular side of the membrane. Residues 35–61 (LSGNVTGPGPHSASGSSRRDVPVTSPP) are disordered. N-linked (GlcNAc...) asparagine glycosylation is present at Asn38. 5 disulfide bridges follow: Cys68–Cys182, Cys74–Cys138, Cys82–Cys131, Cys122–Cys158, and Cys151–Cys173. The region spanning 69–185 (GRAAHCEPLR…DHFPEGCPNE (117 aa)) is the FZ domain. Asp99 lines the cholesterol pocket. Asn192 carries N-linked (GlcNAc...) asparagine glycosylation. 3 disulfide bridges follow: Cys197–Cys217, Cys221–Cys299, and Cys318–Cys394. The chain crosses the membrane as a helical span at residues 238-258 (IAAFGAVTGLCTLFTLATFVA). The Cytoplasmic portion of the chain corresponds to 259 to 265 (DWRNSNR). Residues 266-286 (YPAVILFYVNACFFVGSIGWL) form a helical membrane-spanning segment. The Extracellular portion of the chain corresponds to 287 to 318 (AQFMDGARREIVCRADGTMRFGEPTSSETLSC). The chain crosses the membrane as a helical span at residues 319 to 339 (VIIFVIVYYALMAGVVWFVVL). At 340–362 (TYAWHTSFKALGTTYQPLSGKTS) the chain is on the cytoplasmic side. The helical transmembrane segment at 363-383 (YFHLLTWSLPFVLTVAILAVA) threads the bilayer. The Extracellular portion of the chain corresponds to 384 to 406 (QVDGDSVSGICFVGYKNYRYRAG). Tyr398 serves as a coordination point for cholesterol. The chain crosses the membrane as a helical span at residues 407–427 (FVLAPIGLVLIVGGYFLIRGV). Residues 428–455 (MTLFSIKSNHPGLLSEKAASKINETMLR) are Cytoplasmic-facing. Residues 456–476 (LGIFGFLAFGFVLITFSCHFY) traverse the membrane as a helical segment. Residues 477-528 (DFFNQAEWERSFRDYVLCQANVTIGLPTKKPIPDCEIKNRPSLLVEKINLFA) are Extracellular-facing. A disulfide bond links Cys494 and Cys511. Residue Asn497 is glycosylated (N-linked (GlcNAc...) asparagine). The chain crosses the membrane as a helical span at residues 529 to 549 (MFGTGIAMSTWVWTKATLLIW). An interaction with BBS5 and BBS7 region spans residues 542–573 (TKATLLIWRRTWCRLTGHSDDEPKRIKKSKMI). Over 550–793 (RRTWCRLTGH…AEILDADSDF (244 aa)) the chain is Cytoplasmic. Ser560, Ser578, and Ser594 each carry phosphoserine. The tract at residues 574 to 657 (AKAFSKRREL…TPVPPEEQAN (84 aa)) is required for interaction with PRKACA. The segment at 585–597 (QNPGQELSFSMHT) is interaction with DLG5. Phosphothreonine is present on Thr597. 2 positions are modified to phosphoserine: Ser599 and Ser642. Phosphothreonine occurs at positions 644 and 648. Residue Ser666 is modified to Phosphoserine. Residues 674 to 684 (GRKKKRRKRKK) are compositionally biased toward basic residues. Residues 674–703 (GRKKKRRKRKKEVCPLRPAPELHHSAPVPA) are disordered.

Belongs to the G-protein coupled receptor Fz/Smo family. In terms of assembly, homodimer. Interacts (via C-terminus) with protein kinase A catalytic subunit PRKACA; interacts with free PRKACA subunits and the interaction leads to sequestration of PRKACA at the membrane, preventing PRKACA-mediated phosphorylation of GLI transcription factors. Interacts with ARRB2. Interacts with BBS5 and BBS7; the interactions are indicative for the association of SMO with the BBsome complex to facilitate ciliary localization of SMO. Interacts with KIF7, DLG5 and SDCBP. Interacts with GAS8/DRC4. In terms of processing, phosphorylation by GRK kinases is required for interaction with protein kinase A catalytic subunit PRKACA. As to expression, during early somite stages of embryonic development, modestly up-regulated in the cells of the node (at protein level).

Its subcellular location is the cell membrane. It localises to the cell projection. The protein localises to the cilium. G protein-coupled receptor which associates with the patched protein (PTCH) to transduce hedgehog protein signaling. Binding of sonic hedgehog (SHH) to its receptor patched prevents inhibition of smoothened (SMO) by patched. When active, SMO binds to and sequesters protein kinase A catalytic subunit PRKACA at the cell membrane, preventing PRKACA-mediated phosphorylation of GLI transcription factors which releases the GLI proteins from PRKACA-mediated inhibition and allows for transcriptional activation of hedgehog pathway target genes. Required for the accumulation of KIF7, GLI2 and GLI3 in the cilia. Interacts with DLG5 at the ciliary base to induce the accumulation of KIF7 and GLI2 at the ciliary tip for GLI2 activation. In Mus musculus (Mouse), this protein is Protein smoothened (Smo).